The following is a 633-amino-acid chain: Chaperone protein HtpG (633 aa).

The tract at residues 1–345 (MSADTQSETL…SDDLPLNISR (345 aa)) is a; substrate-binding. The interval 346–562 (EMLQHNPMIS…EYDFGMGMQR (217 aa)) is b. The interval 563-633 (LLQAAGHQLP…VRRVNNLLAG (71 aa)) is c.

Belongs to the heat shock protein 90 family. In terms of assembly, homodimer.

Its subcellular location is the cytoplasm. Its function is as follows. Molecular chaperone. Has ATPase activity. This chain is Chaperone protein HtpG, found in Halorhodospira halophila (strain DSM 244 / SL1) (Ectothiorhodospira halophila (strain DSM 244 / SL1)).